The sequence spans 227 residues: Pyridoxine/pyridoxamine 5'-phosphate oxidase (227 aa).

Residues 23–26 and Lys-81 each bind substrate; that span reads RREY. FMN is bound by residues 76–81, 91–92, Arg-97, Lys-98, and Gln-120; these read RIVLLK and YT. The substrate site is built by Tyr-138, Arg-142, and Ser-146. FMN-binding positions include 155 to 156 and Trp-200; that span reads QS. Substrate is bound at residue 206–208; the sequence is RLH. FMN is bound at residue Arg-210.

It belongs to the pyridoxamine 5'-phosphate oxidase family. Homodimer. FMN is required as a cofactor.

The enzyme catalyses pyridoxamine 5'-phosphate + O2 + H2O = pyridoxal 5'-phosphate + H2O2 + NH4(+). It catalyses the reaction pyridoxine 5'-phosphate + O2 = pyridoxal 5'-phosphate + H2O2. Its pathway is cofactor metabolism; pyridoxal 5'-phosphate salvage; pyridoxal 5'-phosphate from pyridoxamine 5'-phosphate: step 1/1. It participates in cofactor metabolism; pyridoxal 5'-phosphate salvage; pyridoxal 5'-phosphate from pyridoxine 5'-phosphate: step 1/1. In terms of biological role, catalyzes the oxidation of either pyridoxine 5'-phosphate (PNP) or pyridoxamine 5'-phosphate (PMP) into pyridoxal 5'-phosphate (PLP). The sequence is that of Pyridoxine/pyridoxamine 5'-phosphate oxidase from Pectobacterium atrosepticum (strain SCRI 1043 / ATCC BAA-672) (Erwinia carotovora subsp. atroseptica).